We begin with the raw amino-acid sequence, 226 residues long: Probable functional amyloid protease FapD (226 aa).

Residues 1-18 form the signal peptide; that stretch reads MRTLILSLLLLVDLTTQA. One can recognise a Peptidase C39 domain in the interval 50 to 180; it reads QKTDFSCGAA…KGWNGIVFAV (131 aa). Cys-56 is an active-site residue.

Belongs to the FapD family.

The protein localises to the periplasm. Its function is as follows. Probable protease that might be involved in processing fibril precursors. Upon overexpression of the endogenous six-gene locus (fapA-fapF), cells form large clumps during liquid growth, make large amounts of biofilm and produce amyloid fibrils. This chain is Probable functional amyloid protease FapD, found in Pseudomonas aeruginosa (strain ATCC 15692 / DSM 22644 / CIP 104116 / JCM 14847 / LMG 12228 / 1C / PRS 101 / PAO1).